The chain runs to 315 residues: Gamma-hemolysin component C (315 aa).

The signal sequence occupies residues 1–29; the sequence is MLKNKILATTLSVSLLAPLANPLLENAKA.

Belongs to the aerolysin family. Toxicity requires sequential binding and synergistic association of a class S and a class F component which form heterooligomeric complexes. HlgC (class S) associates with HlgB (class F) thus forming an CB toxin.

Functionally, toxin that seems to act by forming pores in the membrane of the cell. Has a hemolytic and a leucotoxic activity. The protein is Gamma-hemolysin component C (hlgC) of Staphylococcus aureus (strain MSSA476).